Consider the following 334-residue polypeptide: Baseplate wedge protein gp8 (334 aa).

Cys142 and Cys153 are joined by a disulfide.

Belongs to the tevenvirinae baseplate structural protein gp8 family. Homodimer. Interacts with gp7. Part of the baseplate macromolecular complex which consists of gp5, gp5.4, gp27 (central spike complex); gp6, gp25, gp53 (inner baseplate); gp7, gp8 (intermediate baseplate); gp9, gp10, gp11, gp12 (peripheral); gp48 and gp54 (proximal region of the tail tube).

Its subcellular location is the virion. In terms of biological role, intermediate baseplate protein. Involved in the tail assembly. The chain is Baseplate wedge protein gp8 (8) from Enterobacteria phage T4 (Bacteriophage T4).